A 508-amino-acid chain; its full sequence is POTE ankyrin domain family member G (508 aa).

5 ANK repeats span residues 172–201, 205–234, 238–267, 271–300, and 304–333; these read QKRT…QLNI, KKRT…DPNI, YGNT…DIES, HGLT…NLNA, and YGRT…DVSS. The segment covering 367-376 has biased composition (polar residues); sequence KVSSENSNPE. The interval 367–488 is disordered; sequence KVSSENSNPE…QLSEEQNTGI (122 aa). Basic and acidic residues-rich tracts occupy residues 377-392 and 406-421; these read QDLK…RLKG and EINK…EMKK. A compositionally biased stretch (polar residues) spans 476–488; it reads TQKQLSEEQNTGI.

The protein belongs to the POTE family.

The polypeptide is POTE ankyrin domain family member G (POTEG) (Homo sapiens (Human)).